We begin with the raw amino-acid sequence, 110 residues long: Large ribosomal subunit protein uL22 (110 aa).

This sequence belongs to the universal ribosomal protein uL22 family. As to quaternary structure, part of the 50S ribosomal subunit.

In terms of biological role, this protein binds specifically to 23S rRNA; its binding is stimulated by other ribosomal proteins, e.g. L4, L17, and L20. It is important during the early stages of 50S assembly. It makes multiple contacts with different domains of the 23S rRNA in the assembled 50S subunit and ribosome. Its function is as follows. The globular domain of the protein is located near the polypeptide exit tunnel on the outside of the subunit, while an extended beta-hairpin is found that lines the wall of the exit tunnel in the center of the 70S ribosome. This chain is Large ribosomal subunit protein uL22, found in Solidesulfovibrio magneticus (strain ATCC 700980 / DSM 13731 / RS-1) (Desulfovibrio magneticus).